The chain runs to 264 residues: tRNA (guanine-N(7)-)-methyltransferase (264 aa).

The tract at residues 1 to 39 is disordered; sequence MIHDDDPNAPGAPHDDATAAPASATRAAPAAGDDDDANP. A compositionally biased stretch (low complexity) spans 18–31; sequence TAAPASATRAAPAA. Residues glutamate 94, glutamate 119, aspartate 146, and aspartate 169 each coordinate S-adenosyl-L-methionine. The active site involves aspartate 169. Residues lysine 173, aspartate 205, and 240 to 243 each bind substrate; that span reads TKFE.

Belongs to the class I-like SAM-binding methyltransferase superfamily. TrmB family.

The catalysed reaction is guanosine(46) in tRNA + S-adenosyl-L-methionine = N(7)-methylguanosine(46) in tRNA + S-adenosyl-L-homocysteine. The protein operates within tRNA modification; N(7)-methylguanine-tRNA biosynthesis. Catalyzes the formation of N(7)-methylguanine at position 46 (m7G46) in tRNA. The protein is tRNA (guanine-N(7)-)-methyltransferase of Burkholderia mallei (strain ATCC 23344).